The following is a 640-amino-acid chain: Large subunit GTPase 1 (640 aa).

The interval 1 to 26 is disordered; it reads MPPKEAPKKWKAPKGPKPTHRKNKNK. Positions 9-24 are enriched in basic residues; the sequence is KWKAPKGPKPTHRKNK. At S103 the chain carries Phosphoserine. One can recognise a CP-type G domain in the interval 188-394; sequence WKQLWRVVER…LCDCPGLVFP (207 aa). GTP-binding positions include 236–239, 343–350, and 387–390; these read NKAD, GYPNVGKS, and DCPG. A disordered region spans residues 607–640; sequence TPFHKVQNSSAGKRHNKKNKSKNAKSKVFSIENN. Residues 618-631 show a composition bias toward basic residues; the sequence is GKRHNKKNKSKNAK.

The protein belongs to the TRAFAC class YlqF/YawG GTPase family. LSG1 subfamily. As to quaternary structure, associates with the 60S ribosomal subunit. Interacts with ARB1.

It localises to the cytoplasm. Its function is as follows. GTPase required for the nuclear export of the 60S ribosomal subunit. Acts by mediating the release of NMD3 from the 60S ribosomal subunit after export into the cytoplasm. This chain is Large subunit GTPase 1 (LSG1), found in Saccharomyces cerevisiae (strain ATCC 204508 / S288c) (Baker's yeast).